The primary structure comprises 516 residues: Rho guanine nucleotide exchange factor 9 (516 aa).

Residues 8-67 form the SH3 domain; that stretch reads DSIVSAEAVWDHVTMANRELAFKAGDVIKVLDASNKDWWWGQIDDEEGWFPASFVRLWVN. An interaction with GPHN region spans residues 100–110; that stretch reads RDQMRANVINE. The region spanning 103-287 is the DH domain; it reads MRANVINEIM…RNVTQQINER (185 aa). In terms of domain architecture, PH spans 318–425; it reads ELIYTGEMAW…WLRAFREERK (108 aa). The disordered stretch occupies residues 453-480; the sequence is PKQKGVNSARSVPPSYPPPQDPLNHGQY. Ser502 is subject to Phosphoserine.

Interacts with GPHN. In terms of tissue distribution, detected in brain. Detected at low levels in heart.

It localises to the cytoplasm. The protein resides in the postsynaptic density. Functionally, acts as a guanine nucleotide exchange factor (GEF) for CDC42. Promotes formation of GPHN clusters. This is Rho guanine nucleotide exchange factor 9 (ARHGEF9) from Homo sapiens (Human).